The sequence spans 453 residues: Ribosomal protein uS12 methylthiotransferase RimO (453 aa).

An MTTase N-terminal domain is found at 5–120 (PKVGFVSLGC…VMQAVHSHLP (116 aa)). [4Fe-4S] cluster-binding residues include cysteine 14, cysteine 50, cysteine 79, cysteine 151, cysteine 155, and cysteine 158. The region spanning 137-382 (LTPRHYAYLK…MEVAEEVSAR (246 aa)) is the Radical SAM core domain. In terms of domain architecture, TRAM spans 385-453 (QRKVGKTLKV…ADGHDLWGEV (69 aa)).

This sequence belongs to the methylthiotransferase family. RimO subfamily. It depends on [4Fe-4S] cluster as a cofactor.

Its subcellular location is the cytoplasm. The catalysed reaction is L-aspartate(89)-[ribosomal protein uS12]-hydrogen + (sulfur carrier)-SH + AH2 + 2 S-adenosyl-L-methionine = 3-methylsulfanyl-L-aspartate(89)-[ribosomal protein uS12]-hydrogen + (sulfur carrier)-H + 5'-deoxyadenosine + L-methionine + A + S-adenosyl-L-homocysteine + 2 H(+). In terms of biological role, catalyzes the methylthiolation of an aspartic acid residue of ribosomal protein uS12. The chain is Ribosomal protein uS12 methylthiotransferase RimO from Burkholderia vietnamiensis (strain G4 / LMG 22486) (Burkholderia cepacia (strain R1808)).